Here is a 79-residue protein sequence, read N- to C-terminus: Exodeoxyribonuclease 7 small subunit (79 aa).

Belongs to the XseB family. Heterooligomer composed of large and small subunits.

It localises to the cytoplasm. The enzyme catalyses Exonucleolytic cleavage in either 5'- to 3'- or 3'- to 5'-direction to yield nucleoside 5'-phosphates.. Functionally, bidirectionally degrades single-stranded DNA into large acid-insoluble oligonucleotides, which are then degraded further into small acid-soluble oligonucleotides. The protein is Exodeoxyribonuclease 7 small subunit of Dechloromonas aromatica (strain RCB).